The primary structure comprises 270 residues: Nuclease P1 (270 aa).

Residues Trp-1, His-6, His-15, Asp-45, and His-60 each contribute to the a divalent metal cation site. 1–6 contributes to the substrate binding site; it reads WGALGH. Residues 45 to 51, 60 to 63, and 73 to 78 contribute to the substrate site; these read DEYRLTS, HFID, and NVDYER. 2 cysteine pairs are disulfide-bonded: Cys-72–Cys-217 and Cys-80–Cys-85. The N-linked (GlcNAc...) asparagine glycan is linked to Asn-92. The a divalent metal cation site is built by His-116, Asp-120, and His-126. The segment at 116 to 164 is substrate binding; it reads HFIGDMTQPLHDEAYAVGGNKINVTFDGYHDNLHSDWDTYMPQKLIGGH. A glycan (N-linked (GlcNAc...) asparagine) is linked at Asn-138. 2 residues coordinate a divalent metal cation: His-149 and Asp-153. N-linked (GlcNAc...) asparagine glycans are attached at residues Asn-184 and Asn-197.

Belongs to the nuclease type I family. Requires Zn(2+) as cofactor.

It is found in the secreted. The enzyme catalyses Endonucleolytic cleavage to 5'-phosphomononucleotide and 5'-phosphooligonucleotide end-products.. Hydrolyzes only single-stranded DNA and RNA without apparent specificity for bases. The chain is Nuclease P1 from Penicillium citrinum.